The primary structure comprises 434 residues: D-amino acid dehydrogenase (434 aa).

3 to 17 (VLVLGSGVIGTASAY) provides a ligand contact to FAD.

This sequence belongs to the DadA oxidoreductase family. The cofactor is FAD.

The enzyme catalyses a D-alpha-amino acid + A + H2O = a 2-oxocarboxylate + AH2 + NH4(+). It participates in amino-acid degradation; D-alanine degradation; NH(3) and pyruvate from D-alanine: step 1/1. Its function is as follows. Oxidative deamination of D-amino acids. In Pseudomonas entomophila (strain L48), this protein is D-amino acid dehydrogenase.